The primary structure comprises 426 residues: Interferon regulatory factor 8 (426 aa).

The segment at residues Gly7 to Pro114 is a DNA-binding region (IRF tryptophan pentad repeat).

The protein belongs to the IRF family. As to quaternary structure, interacts (via C-terminus) with TRIM21 (via C-terminus). Interacts with the BATF-JUNB heterodimer. Interacts with BATF (via bZIP domain); the interaction is direct. Interacts with COPS2. Interacts with SPI1. In terms of processing, ubiquitinated. Ubiquitination by TRIM21 in macrophages, a process that is strongly increased upon interferon gamma stimulation, leds to the enhanced transcriptional activity of target cytokine genes. Ubiquitination leads to its degradation by the proteasome. Sumoylated with SUMO3. Desumoylated by SENP1. As to expression, predominantly expressed in lymphoid tissues.

Its subcellular location is the nucleus. It localises to the cytoplasm. In terms of biological role, transcription factor that specifically binds to the upstream regulatory region of type I interferon (IFN) and IFN-inducible MHC class I genes (the interferon consensus sequence (ICS)). Can both act as a transcriptional activator or repressor. Plays a negative regulatory role in cells of the immune system. Involved in CD8(+) dendritic cell differentiation by forming a complex with the BATF-JUNB heterodimer in immune cells, leading to recognition of AICE sequence (5'-TGAnTCA/GAAA-3'), an immune-specific regulatory element, followed by cooperative binding of BATF and IRF8 and activation of genes. Required for the development of plasmacytoid dendritic cells (pDCs), which produce most of the type I IFN in response to viral infection. Positively regulates macroautophagy in dendritic cells. Acts as a transcriptional repressor of osteoclast differentiation factors such as NFATC1 and EEIG1. In Homo sapiens (Human), this protein is Interferon regulatory factor 8.